The sequence spans 492 residues: Probable cytosol aminopeptidase (492 aa).

Positions 248 and 253 each coordinate Mn(2+). Lys260 is a catalytic residue. Mn(2+)-binding residues include Asp271, Asp330, and Glu332. The active site involves Arg334.

It belongs to the peptidase M17 family. Mn(2+) is required as a cofactor.

It localises to the cytoplasm. The catalysed reaction is Release of an N-terminal amino acid, Xaa-|-Yaa-, in which Xaa is preferably Leu, but may be other amino acids including Pro although not Arg or Lys, and Yaa may be Pro. Amino acid amides and methyl esters are also readily hydrolyzed, but rates on arylamides are exceedingly low.. The enzyme catalyses Release of an N-terminal amino acid, preferentially leucine, but not glutamic or aspartic acids.. Functionally, presumably involved in the processing and regular turnover of intracellular proteins. Catalyzes the removal of unsubstituted N-terminal amino acids from various peptides. The polypeptide is Probable cytosol aminopeptidase (pepA) (Aeropyrum pernix (strain ATCC 700893 / DSM 11879 / JCM 9820 / NBRC 100138 / K1)).